The primary structure comprises 159 residues: MFSRTIPAAARLFSTTGKPPAGIPVIVCGRTSQIGDVVREELQPEYEVTHLFLSPATAKSEIPALLRQTGSTTSTETDKSPAAIIMGGGYTQTDLQEIRAASQGPDTKPVAWLKVDPAKTPSSIPVGPEYGRAVAKRTKDRLDELVRNGGIDRDEVHFI.

In terms of biological role, negatively regulates mycelium growth and conidial formation and is required for stress tolerance. Plays a role in kojic acid synthesis in coordination with kojA, kojR and kojT where it acts upstream of kojA. The sequence is that of Kojic acid related protein 6 from Aspergillus oryzae (strain ATCC 42149 / RIB 40) (Yellow koji mold).